Here is a 377-residue protein sequence, read N- to C-terminus: Acetyltransferase ple2 (377 aa).

An N-terminal signal peptide occupies residues 1–27 (MKPFSPELLVLSFILLVLSCAIRPAKG). Helical transmembrane passes span 29–49 (WILW…TTGD), 56–76 (IANN…LTDV), 176–196 (IAAW…ALSL), and 258–278 (PALY…HAIG).

It belongs to the wax synthase family.

The protein localises to the membrane. It participates in secondary metabolite biosynthesis; terpenoid biosynthesis. In terms of biological role, acetyltransferase; part of the gene cluster that mediates the biosynthesis of pleuromutilin, a tricyclic diterpene showing antibacterial properties. The geranylgeranyl diphosphate (GGPP) synthase ple4 catalyzes the first step in pleuromutilin biosynthesis. GGPP is then substrate of the premutilin synthase (PS) ple3 to yield premutilin. Premutilin synthase is a bifunctional enzyme composed of the fusion of a class II diterpene cyclase (DTC) and a class I diterpene synthase (DTS), with the corresponding domains and active sites containing characteristic aspartate-rich motifs. GGPP is first converted to mutildienyl-diphosphate (MPP) at the class II DTC site. MPP is subsequently further cyclized at the class I DTS site, followed by a 1,5-hydride shift and addition of water prior to terminating deprotonation, to yield premutilin. The cytochrome P450 monooxygenases ple5 and ple6 hydroxylate premutilin at C-11 and C-3, respectively, producing 11-hydroxypremutilin and 3-hydroxypremutilin. The combination of the actions of both ple5 and ple6 leads to the production of 3,11-dihydroxypremutilin. The short chain dehydrogenase ple7 further converts 3,11-dihydroxypremutilin into mutilin. The acetyltransferase ple2 then acetylates mutilin to produce 14-O-acetylmutilin. Finally, the cytochrome P450 monooxygenase ple1 catalyzes hydroxylation on the alpha position of the acetyl side chain of 14-O-acetylmutilin to yield pleuromutilin. The polypeptide is Acetyltransferase ple2 (Rhodocybe pseudopiperita (Clitopilus pseudopiperitus)).